We begin with the raw amino-acid sequence, 730 residues long: Probable G-protein coupled receptor 149 (730 aa).

At 1-34 (MSFFLSNLTNDSRLWKVSHNSTDLMNSPETLTLS) the chain is on the extracellular side. Residues Asn7, Asn10, and Asn20 are each glycosylated (N-linked (GlcNAc...) asparagine). Residues 35–55 (LFCLICLMTLVALVGSIFSLV) traverse the membrane as a helical segment. At 56–68 (SLLTMQYRTVVSM) the chain is on the cytoplasmic side. A helical transmembrane segment spans residues 69-89 (LVTSWSVDDLLSVLSVAIFMV). The Extracellular segment spans residues 90–108 (LQWPREAPGYFQSLCTTSA). An intrachain disulfide couples Cys104 to Cys181. The helical transmembrane segment at 109-131 (LLYMCQGLSSNLKATLIVFYNFY) threads the bilayer. Residues 132-148 (TMHRTVVSQSSSWRSGQ) lie on the Cytoplasmic side of the membrane. Residues 149 to 169 (VLGVALTVWAVSLLLASLPLC) form a helical membrane-spanning segment. Residues 170-188 (GWGVFVRTPWGCLTDCSSP) lie on the Extracellular side of the membrane. The chain crosses the membrane as a helical span at residues 189 to 209 (YVLLLFAVYASAFGLLAVLSV). Topologically, residues 210-308 (PLTHQLLCSE…SFPVSLAQKR (99 aa)) are cytoplasmic. The chain crosses the membrane as a helical span at residues 309–329 (FALILALTKVILWLPMMIHMV). At 330 to 340 (VKHVVGFQSLP) the chain is on the extracellular side. The chain crosses the membrane as a helical span at residues 341–361 (VDMLSFLLTLLASTVTPVFVL). At 362–730 (SKRWAHLPCG…RKREAESKGN (369 aa)) the chain is on the cytoplasmic side.

Belongs to the G-protein coupled receptor 1 family. As to expression, expressed exclusively in brain and testis.

It localises to the cell membrane. Functionally, orphan receptor. The sequence is that of Probable G-protein coupled receptor 149 (Gpr149) from Rattus norvegicus (Rat).